A 160-amino-acid chain; its full sequence is MSTLKKPDLSDPKLRAKLAKGMGHNYYGEPAWPNDLLYIFPVVILGTIACVVGLAVLDPAMLGDKANPFATPLEILPEWYLYPVFQILRVVPNKLLGIALQTLIPLGLMILPFIENVNKFSNPFRRPIAMSVFLFGTFLTIYLGIGACLPIDKSLTLGLF.

3 helical membrane-spanning segments follow: residues 36 to 56 (LLYI…GLAV), 95 to 115 (LLGI…PFIE), and 128 to 148 (IAMS…IGAC).

It belongs to the cytochrome b family. PetD subfamily. As to quaternary structure, the 4 large subunits of the cytochrome b6-f complex are cytochrome b6, subunit IV (17 kDa polypeptide, PetD), cytochrome f and the Rieske protein, while the 4 small subunits are PetG, PetL, PetM and PetN. The complex functions as a dimer.

It localises to the cellular thylakoid membrane. Functionally, component of the cytochrome b6-f complex, which mediates electron transfer between photosystem II (PSII) and photosystem I (PSI), cyclic electron flow around PSI, and state transitions. The polypeptide is Cytochrome b6-f complex subunit 4 (Prochlorococcus marinus (strain MIT 9301)).